A 719-amino-acid polypeptide reads, in one-letter code: T-cell immunomodulatory protein homolog (719 aa).

The N-terminal stretch at 1–32 (MYNFLSCKKKSIILQVLLIICTYNILLNFVNI) is a signal peptide. Residues 33–677 (FVNNNEKNHK…LSVNPSKKFY (645 aa)) lie on the Extracellular side of the membrane. N-linked (GlcNAc...) asparagine glycans are attached at residues Asn-144, Asn-277, Asn-410, Asn-540, and Asn-659. A helical transmembrane segment spans residues 678–697 (SILYITLICLSVIGVLIFIL). The Cytoplasmic segment spans residues 698 to 719 (DRKEKVEDSKEELGFKSHFVIG).

The protein belongs to the TIP family.

It localises to the membrane. May protect the parasite against attack by the host immune system by immunomodulation. In Plasmodium falciparum (isolate 3D7), this protein is T-cell immunomodulatory protein homolog.